The primary structure comprises 770 residues: ARF GTPase-activating protein GIT1 (770 aa).

One can recognise an Arf-GAP domain in the interval 1 to 124; it reads MSRKGPRAEV…AFVHKLPCRD (124 aa). The segment at 1–124 is interaction with gamma-tubulin and localization to the centrosome; the sequence is MSRKGPRAEV…AFVHKLPCRD (124 aa). The segment at 11-34 adopts a C4-type zinc-finger fold; it reads CADCSAPDPGWASISRGVLVCDEC. ANK repeat units lie at residues 132–161, 166–195, and 199–228; these read DLSK…QANF, KGTT…DPGS, and NGRT…ELTD. At tyrosine 224 the chain carries Phosphotyrosine. Positions 245-374 are interaction with PCLO; the sequence is HYIIPQMADR…QGKSLSSPTD (130 aa). The segment at 253–424 is interaction with PTK2/FAK1; the sequence is DRSRQKCMSQ…NRARSMDSSD (172 aa). An interaction with ARHGEF7 region spans residues 254–376; that stretch reads RSRQKCMSQS…KSLSSPTDNL (123 aa). The segment at 363 to 425 is disordered; the sequence is RQQGKSLSSP…RARSMDSSDL (63 aa). A compositionally biased stretch (polar residues) spans 366–383; that stretch reads GKSLSSPTDNLELSARSQ. Residues serine 368 and serine 371 each carry the phosphoserine modification. At threonine 373 the chain carries Phosphothreonine. The interval 375–596 is interaction with NCK2 and GRIN3A; sequence NLELSARSQS…QEGSRHASKL (222 aa). A required for localization at synapses region spans residues 375 to 596; sequence NLELSARSQS…QEGSRHASKL (222 aa). A phosphoserine mark is found at serine 379 and serine 384. Phosphotyrosine is present on tyrosine 392. 2 positions are modified to phosphoserine: serine 394 and serine 397. A compositionally biased stretch (acidic residues) spans 394 to 403; the sequence is SVASDEDTDQ. A Phosphothreonine modification is found at threonine 401. 3 positions are modified to phosphoserine: serine 419, serine 422, and serine 426. The tract at residues 420 to 475 is interaction with MAPK1; that stretch reads MDSSDLSDGAVTLQEYLELKKALATSEAKVQQLMKVNSSLSDELRRLQREIHKLQA. Positions 429-629 are interaction with IKBKG; the sequence is AVTLQEYLEL…EGKRFLELSK (201 aa). Positions 449–483 form a coiled coil; the sequence is VQQLMKVNSSLSDELRRLQREIHKLQAENLQLRQP. A phosphoserine mark is found at serine 507 and serine 545. Position 546 is a phosphothreonine (threonine 546). Phosphotyrosine occurs at positions 554 and 563. Phosphoserine occurs at positions 570, 580, 601, and 605. Over residues 578-588 the composition is skewed to polar residues; sequence PSSPLLSCSQE. The disordered stretch occupies residues 578–615; that stretch reads PSSPLLSCSQEGSRHASKLSRHGSGADSDYENTQSGDP. Threonine 610 is modified (phosphothreonine). Serine 639 carries the post-translational modification Phosphoserine. The interaction with PXN and TGFB1I1 stretch occupies residues 646–770; that stretch reads PGLPSTEDVI…VTITTREKKQ (125 aa).

Forms homodimers and possibly oligomers. May forms heterooligomers with GIT2. Interacts with G protein-coupled receptor kinases, including GRK2, GRK3, GRK5 and GRK6. Interacts with PPFIA1, PPFIA2 and PPFIA4. Interacts with GRIP1 and forms a ternary complex with PPFIA1 and GRIP1. Directly interacts with ARHGEF7/beta-PIX, forming in vitro a heptameric complex made of a GIT1 dimer and an ARHGEF7 trimer. Directly interacts with PXN/paxillin; this interaction is enhanced in the presence of ARHGEF7. Directly interacts (via C-terminus) with TGFB1I1/Hic-5 (via LD motif 3). Directly interacts with PTK2/FAK1. May interact with PTK2B/PYK2; this interaction may be indirect. Interacts with AMPA receptors GRIA2/3. Directly interacts with protein Piccolo/PCLO. Forms a complex with Ephrin-B1/EFNB1 and NCK2/GRB4 (via SH2); this interaction is important for spine morphogenesis and synapse formation. Interaction with NCK2 is transient and depends upon GIT1 phosphorylation at Tyr-392. Interacts with GRIN3A/GluN3A (via C-terminus); this interaction competes with GIT1 interaction with ARHGEF7 and limits synaptic localization of GIT1. Interacts with IKBKG/NEMO in resting bone mesenchymal stem cells, as well as in TNF-stimulated cells; this interaction may increase IKBKG affinity for 'Lys-63'-linked polyubiquitin chains. Interacts with GABA(A) receptors, including GABRB3 and GABRG2. Interacts with SCRIB. Interacts (via N- and C-terminus) with ENTR1/SDCCAG3 (via N-terminus); this interaction is direct. May form a tripartite complex with ENTR1 and PTPN13. Interacts with YWHAZ. Interacts with PAK1. Interacts with PAK3. Directly interacts (via N-terminus) with gamma-tubulin. Interacts with MAPK1 and MAPK3; this interaction is required for MAPK1/3 recruitment to focal adhesions. In terms of processing, phosphorylated on tyrosine residues by PTK2/FAK1 and SRC in growing fibroblasts. Phosphorylation at Tyr-392 is induced by activation of Ephrin-B1/EFNB1 and catalyzed by SRC family kinases. It is required for the interaction with NCK2 and for GIT1 recruitment to synapses in hippocampal neurons. Expressed in the brain (at protein level). Also expressed at high levels in lung and heart. In lung, expressed in endothelial cells, especially in capillaries; also expressed in smooth muscle and epithelial cells of bronchi (at protein level). Expressed in bone marrow mesenchymal stem cells, as well as in osteoclasts and bone marrow-derived macrophages (at protein level).

The protein resides in the cytoplasm. Its subcellular location is the presynapse. It localises to the postsynapse. It is found in the postsynaptic density. The protein localises to the cell junction. The protein resides in the focal adhesion. Its subcellular location is the cell projection. It localises to the lamellipodium. It is found in the cytoskeleton. The protein localises to the microtubule organizing center. The protein resides in the centrosome. Its subcellular location is the spindle pole. Functionally, GTPase-activating protein for ADP ribosylation factor family members, including ARF1. Multidomain scaffold protein that interacts with numerous proteins and therefore participates in many cellular functions, including receptor internalization, focal adhesion remodeling, and signaling by both G protein-coupled receptors and tyrosine kinase receptors. Through PAK1 activation, positively regulates microtubule nucleation during interphase. Plays a role in the regulation of cytokinesis; for this function, may act in a pathway also involving ENTR1 and PTPN13. May promote cell motility both by regulating focal complex dynamics and by the activation of RAC1. May act as scaffold for MAPK1/3 signal transduction, recruiting MAPK1/3 to focal adhesions after EGF stimulation via a Src-dependent pathway, hence stimulating cell migration. Plays a role in brain development and function. Involved in the regulation of spine density and synaptic plasticity that is required for processes involved in learning. Plays an important role in dendritic spine morphogenesis and synapse formation. In hippocampal neurons, recruits guanine nucleotide exchange factors (GEFs), such as ARHGEF7/beta-PIX, to the synaptic membrane. These in turn locally activate RAC1, which is an essential step for spine morphogenesis and synapse formation. May contribute to the organization of presynaptic active zones through oligomerization and formation of a Piccolo/PCLO-based protein network, which includes ARHGEF7/beta-PIX and FAK1. In neurons, through its interaction with liprin-alpha family members, may be required for AMPA receptor (GRIA2/3) proper targeting to the cell membrane. In complex with GABA(A) receptors and ARHGEF7, plays a crucial role in regulating GABA(A) receptor synaptic stability, maintaining GPHN/gephyrin scaffolds and hence GABAergic inhibitory synaptic transmission, by locally coordinating RAC1 and PAK1 downstream effector activity, leading to F-actin stabilization. May also be important for RAC1 downstream signaling pathway through PAK3 and regulation of neuronal inhibitory transmission at presynaptic input. Required for successful bone regeneration during fracture healing. The function in intramembranous ossification may, at least partly, exerted by macrophages in which GIT1 is a key negative regulator of redox homeostasis, IL1B production, and glycolysis, acting through the ERK1/2/NRF2/NFE2L2 axis. May play a role in angiogenesis during fracture healing. In this process, may regulate activation of the canonical NF-kappa-B signal in bone mesenchymal stem cells by enhancing the interaction between NEMO and 'Lys-63'-ubiquitinated RIPK1/RIP1, eventually leading to enhanced production of VEGFA and others angiogenic factors. Essential for VEGF signaling through the activation of phospholipase C-gamma and ERK1/2, hence may control endothelial cell proliferation and angiogenesis. The sequence is that of ARF GTPase-activating protein GIT1 (Git1) from Mus musculus (Mouse).